Reading from the N-terminus, the 121-residue chain is Putative iron-sulfur cluster insertion protein ErpA (121 aa).

Iron-sulfur cluster is bound by residues Cys-49, Cys-113, and Cys-115.

Belongs to the HesB/IscA family. Homodimer. Iron-sulfur cluster is required as a cofactor.

Functionally, required for insertion of 4Fe-4S clusters. In Polaromonas sp. (strain JS666 / ATCC BAA-500), this protein is Putative iron-sulfur cluster insertion protein ErpA.